The sequence spans 428 residues: tRNA modification GTPase MnmE (428 aa).

(6S)-5-formyl-5,6,7,8-tetrahydrofolate is bound by residues Arg-20, Glu-77, and Lys-117. One can recognise a TrmE-type G domain in the interval 213–351 (GFEVAIIGPP…LVQRISDVLK (139 aa)). Asn-223 lines the K(+) pocket. Residues 223–228 (NAGKST), 242–248 (SEVAGTT), and 267–270 (DTAG) contribute to the GTP site. A Mg(2+)-binding site is contributed by Ser-227. Ser-242, Val-244, and Thr-247 together coordinate K(+). Residue Thr-248 coordinates Mg(2+). A (6S)-5-formyl-5,6,7,8-tetrahydrofolate-binding site is contributed by Lys-428.

Belongs to the TRAFAC class TrmE-Era-EngA-EngB-Septin-like GTPase superfamily. TrmE GTPase family. In terms of assembly, homodimer. Heterotetramer of two MnmE and two MnmG subunits. It depends on K(+) as a cofactor.

The protein localises to the cytoplasm. Its function is as follows. Exhibits a very high intrinsic GTPase hydrolysis rate. Involved in the addition of a carboxymethylaminomethyl (cmnm) group at the wobble position (U34) of certain tRNAs, forming tRNA-cmnm(5)s(2)U34. This chain is tRNA modification GTPase MnmE, found in Ruegeria pomeroyi (strain ATCC 700808 / DSM 15171 / DSS-3) (Silicibacter pomeroyi).